The chain runs to 453 residues: MSWSILELVRNNPDKLKEYIKRRFIDVSLVDRAVELDKKWRQTLQEVEKLRHEHNVISSSIPKAKPEERQELIKKAKELLKALEEKEKELDNIENERDNILMQLPNIVDDSAPIGPDETYSVPIRFWGKFKVYEKDEAEFLSQLKGNRVDYEIIHWKPVGHADMLENVLKLGDTKKAAEVSGARFYYLFDDIVWLDIALLNYAIDTMTSKGYTLVLPPYMLRGEVIKSVIDLDTFKDAIYKIENEDLYLIATAEHPIAALYFKEEIPKEKLPLKYVGISPAFRKEAGAANKDLKGIFRVHQFHKVEQFIFSSPEDSWKLHEELIRNAEEIFQGLGLPYRVINIATGDLGACAAKKYDLEVWMPAQAKFREMVSCSNCLDWQAYRMRIRYVEKGGKKGYVHTLNSTAIASTRTITAILENYQREDGVVEIPKVLKKYLEPFSRAPKDYIYPRKE.

Residue 252–254 (TAE) coordinates L-serine. ATP-binding positions include 283–285 (RKE) and Val-299. Position 306 (Glu-306) interacts with L-serine. An ATP-binding site is contributed by 370–373 (EMVS). Thr-405 contacts L-serine.

It belongs to the class-II aminoacyl-tRNA synthetase family. Type-1 seryl-tRNA synthetase subfamily. As to quaternary structure, homodimer. The tRNA molecule binds across the dimer.

It localises to the cytoplasm. The catalysed reaction is tRNA(Ser) + L-serine + ATP = L-seryl-tRNA(Ser) + AMP + diphosphate + H(+). It catalyses the reaction tRNA(Sec) + L-serine + ATP = L-seryl-tRNA(Sec) + AMP + diphosphate + H(+). It functions in the pathway aminoacyl-tRNA biosynthesis; selenocysteinyl-tRNA(Sec) biosynthesis; L-seryl-tRNA(Sec) from L-serine and tRNA(Sec): step 1/1. In terms of biological role, catalyzes the attachment of serine to tRNA(Ser). Is also able to aminoacylate tRNA(Sec) with serine, to form the misacylated tRNA L-seryl-tRNA(Sec), which will be further converted into selenocysteinyl-tRNA(Sec). This Sulfurisphaera tokodaii (strain DSM 16993 / JCM 10545 / NBRC 100140 / 7) (Sulfolobus tokodaii) protein is Serine--tRNA ligase.